A 100-amino-acid chain; its full sequence is Small ribosomal subunit protein uS14c (100 aa).

Residues 1 to 31 (MARKSLIQREKKRQKLEQKYHSIRRSSKKEI) form a disordered region.

This sequence belongs to the universal ribosomal protein uS14 family. Part of the 30S ribosomal subunit.

The protein localises to the plastid. It localises to the chloroplast. In terms of biological role, binds 16S rRNA, required for the assembly of 30S particles. In Solanum bulbocastanum (Wild potato), this protein is Small ribosomal subunit protein uS14c.